A 419-amino-acid chain; its full sequence is Oligouridylate-binding protein 1B (419 aa).

2 consecutive RRM domains span residues 54-128 (RSVY…WAYA) and 139-217 (FNIF…WATK). Residues 217 to 257 (KGATSGEDKQSSDSKSVVELTSGVSEDGKDTTNGEAPENNA) are disordered. S241 bears the Phosphoserine mark. Residues 260 to 335 (TTVYVGNLAP…RQMKCSWGSK (76 aa)) form the RRM 3 domain.

Interacts with UBA1A and UBA2A.

It localises to the nucleus. Heterogeneous nuclear ribonucleoprotein (hnRNP)-like protein that acts as a component of the pre-mRNA processing machinery. Functions to facilitate the nuclear maturation of plant pre-mRNAs. In Arabidopsis thaliana (Mouse-ear cress), this protein is Oligouridylate-binding protein 1B (UBP1B).